Here is a 256-residue protein sequence, read N- to C-terminus: Thrombin-like enzyme cerastocytin (256 aa).

An N-terminal signal peptide occupies residues 1–18 (MVLISVLASLLVLQLSYA). Positions 19–24 (QKSSEL) are excised as a propeptide. In terms of domain architecture, Peptidase S1 spans 25–247 (VIGGAECNIN…YTDWIRNIIA (223 aa)). 5 cysteine pairs are disulfide-bonded: Cys-31/Cys-161, Cys-98/Cys-254, Cys-140/Cys-208, Cys-172/Cys-187, and Cys-198/Cys-223. The N-linked (GlcNAc...) asparagine glycan is linked to Asn-44. Residues His-65 and Asp-108 each act as charge relay system in the active site. N-linked (GlcNAc...) asparagine glycans are attached at residues Asn-119, Asn-120, and Asn-152. Ser-202 (charge relay system) is an active-site residue.

Belongs to the peptidase S1 family. Snake venom subfamily. In terms of assembly, monomer. As to expression, expressed by the venom gland.

It localises to the secreted. Its platelets aggregating activity is inhibited by chlorpromazine, theophylline mepacrine. Its platelet aggregating activity and its amidolytic activity are inhibited by PMSF, TPCK, TLCK and soybean trypsin inhibitors. Is unaffected by hirudin or by antithrombin-III in the presence of heparin. In terms of biological role, thrombin-like snake venom serine protease which potently induces platelet aggregation and has fibrinogenolytic activities. Clots purified fibrinogen and hydrolyzes alpha-chains (FGA). High concentrations of this enzyme also cleave prothrombin (F2) and factor X (F10). Is also able to activate factor XIII (F8). This Cerastes cerastes (Horned desert viper) protein is Thrombin-like enzyme cerastocytin.